Reading from the N-terminus, the 421-residue chain is NADH-dependent phenylglyoxylate dehydrogenase subunit epsilon (421 aa).

FAD is bound by residues 15-18 (SSHA), 39-40 (TR), and 279-297 (ATAQ…NAIL).

This sequence belongs to the FAD-dependent oxidoreductase family. As to quaternary structure, dimer of heteropentamers composed of an alpha (PadG), a beta (PadI), a gamma (PadE), a delta (PadF) and an epsilon (PadH) subunit. FAD is required as a cofactor.

The enzyme catalyses phenylglyoxylate + NAD(+) + CoA = benzoyl-CoA + CO2 + NADH. Its activity is regulated as follows. Activated by magnesium ions and thiamine diphosphate. Its function is as follows. Involved in the anaerobic metabolism of phenylalanine and phenylacetate. Catalyzes the oxidative decarboxylation of phenylglyoxylate to benzoyl-CoA and CO(2). It can also react slowly with 2-oxo-3-methylbutanoate and use different electron acceptors such as benzyl viologen, methyl viologen, FAD or FMN, but NAD seems to be the physiological electron acceptor. Also catalyzes an isotope exchange between CO(2) and the carboxyl group which proves partial or complete reversibility of the oxidative decarboxylation reaction. The sequence is that of NADH-dependent phenylglyoxylate dehydrogenase subunit epsilon (padH) from Aromatoleum evansii (Azoarcus evansii).